Reading from the N-terminus, the 262-residue chain is Short-chain Z-isoprenyl diphosphate synthase (262 aa).

Asp40 is a catalytic residue. Asp40 contributes to the Mg(2+) binding site. Substrate contacts are provided by residues 41–44 (GNRR), Trp45, and 86–88 (STE). The active-site Proton acceptor is the Asn89. Residues Arg92, Arg211, and 217–219 (RLS) contribute to the substrate site. Glu230 is a Mg(2+) binding site.

This sequence belongs to the UPP synthase family. Z-FPP synthase subfamily. The cofactor is Mg(2+).

The catalysed reaction is isopentenyl diphosphate + (2E)-geranyl diphosphate = (2Z,6E)-farnesyl diphosphate + diphosphate. Its pathway is phospholipid metabolism; decaprenyl phosphate biosynthesis. Functionally, generates Z-farnesyl diphosphate (Z-FPP) from isopentenyl pyrophosphate (IPP). Z-FPP is the precursor of decaprenyl diphosphate, which has a central role in the biosynthesis of the mycobacterial cell wall. The protein is Short-chain Z-isoprenyl diphosphate synthase of Mycobacterium bovis (strain ATCC BAA-935 / AF2122/97).